Consider the following 2032-residue polypeptide: Transient receptor potential channel (2032 aa).

The segment covering 129 to 139 (KKTRKHRRRRS) has biased composition (basic residues). Disordered stretches follow at residues 129–162 (KKTR…GHAI), 197–223 (QSKG…AVPT), 831–860 (KKAM…MGGV), 912–945 (ANPM…GSQT), and 1120–1211 (AAEH…EAGN). 3 stretches are compositionally biased toward polar residues: residues 839 to 855 (SRPS…QSTE), 935 to 945 (SLTSASDGSQT), and 1120 to 1129 (AAEHQNDMNY). Over residues 1130–1149 (SSSSSSSSSSSSSSSSSDSS) the composition is skewed to low complexity. The segment covering 1171-1185 (TSQGSAQSLNITSLF) has biased composition (polar residues). 5 consecutive transmembrane segments (helical) span residues 1310–1330 (FWSW…TLLV), 1332–1352 (TPPR…AFGL), 1374–1394 (VCSF…VGFF), 1439–1459 (MIQN…SFGL), and 1535–1555 (LMTF…IAIF). 4 disordered regions span residues 1753–1779 (GTDP…RIRR), 1853–1909 (HPER…SRDQ), 1935–1982 (EEED…EEVD), and 1999–2032 (LNEE…CSDV). Over residues 1935–1947 (EEEDEEEDDEEDD) the composition is skewed to acidic residues. Residues 1951–1962 (RHHIHPRRKSSR) show a composition bias toward basic residues. The segment covering 2016–2032 (SPSSSRADLTSQKCSDV) has biased composition (polar residues).

Belongs to the transient receptor (TC 1.A.4) family. LTrpC subfamily. As to expression, gonads.

It is found in the membrane. Required for initiation and continuation of postembryonic mitotic cell divisions of gonadal cells Z1 and Z4. Zygotic expression is necessary for hermaphrodite fertility. May be a cation channel. The sequence is that of Transient receptor potential channel (gon-2) from Caenorhabditis elegans.